Consider the following 351-residue polypeptide: tRNA-specific 2-thiouridylase MnmA (351 aa).

6–13 serves as a coordination point for ATP; it reads ALSGGTDS. C96 functions as the Nucleophile in the catalytic mechanism. A disulfide bridge connects residues C96 and C193. ATP is bound at residue G120. Residues 143–145 form an interaction with tRNA region; sequence KDQ. Residue C193 is the Cysteine persulfide intermediate of the active site. The tract at residues 298-299 is interaction with tRNA; that stretch reads RY.

It belongs to the MnmA/TRMU family.

The protein localises to the cytoplasm. The catalysed reaction is S-sulfanyl-L-cysteinyl-[protein] + uridine(34) in tRNA + AH2 + ATP = 2-thiouridine(34) in tRNA + L-cysteinyl-[protein] + A + AMP + diphosphate + H(+). Catalyzes the 2-thiolation of uridine at the wobble position (U34) of tRNA, leading to the formation of s(2)U34. The polypeptide is tRNA-specific 2-thiouridylase MnmA (Nitratidesulfovibrio vulgaris (strain DSM 19637 / Miyazaki F) (Desulfovibrio vulgaris)).